We begin with the raw amino-acid sequence, 348 residues long: Outer membrane protein A (348 aa).

The N-terminal stretch at 1–21 (MKKTAIAIAVALAGFATVAQA) is a signal peptide. A run of 8 beta stranded transmembrane segments spans residues 27 to 37 (TWYTGAKLGWS), 55 to 66 (QLGAGAFGGYQV), 70 to 78 (VGFEMGYDW), 96 to 107 (QGVQLTAKLGYP), 112 to 120 (LDIYTRLGG), 146 to 155 (PVFAGGVEYA), 160 to 167 (IATRLEYQ), and 186 to 194 (LLSLGVSYR). Residues 201 to 210 (APVVAPAPAP) form a hinge-like region. 3 tandem repeats follow at residues 205–206 (AP), 207–208 (AP), and 209–210 (AP). The 3 X 2 AA tandem repeats of A-P stretch occupies residues 205-210 (APAPAP). One can recognise an OmpA-like domain in the interval 212–340 (VQTKHFTLKS…RVEIEVKGIK (129 aa)). An intrachain disulfide couples C313 to C325.

The protein belongs to the outer membrane OOP (TC 1.B.6) superfamily. OmpA family. In terms of assembly, monomer and homodimer. As to quaternary structure, (Microbial infection) Upon infection with phage Sf6 associates with the mature bacteriophage capsid. Was originally suggested to be within the bacteriophage capsid. This has been disproven.

It is found in the extracellular vesicle. It localises to the cell outer membrane. In terms of biological role, with TolR probably plays a role in maintaining the position of the peptidoglycan cell wall in the periplasm. Acts as a porin with low permeability that allows slow penetration of small solutes; an internal gate slows down solute passage. Its function is as follows. Required for conjugation with F-type plasmids; probably serves as the mating receptor on recipient cells. Functionally, (Microbial infection) Serves as a secondary receptor during phage Sf6 infection; infection requires both lipopolysaccharide (LPS) and the OmpA beta-barrel. This is Outer membrane protein A from Shigella flexneri.